Consider the following 431-residue polypeptide: C2H2 type master regulator of conidiophore development brlA (431 aa).

Disordered stretches follow at residues 29 to 51 (MTSSFSPLESPTPTPTSLYSHGS), 211 to 275 (TPQQ…SEEY), and 287 to 306 (IRTHRQPSRKPSKKQLVRSN). Positions 30-48 (TSSFSPLESPTPTPTSLYS) are enriched in low complexity. A compositionally biased stretch (polar residues) spans 225 to 265 (PSSNYSDFPASLQTFKPHTPSTPVRSLSLGTPRSDTPQSRM). The span at 287–302 (IRTHRQPSRKPSKKQL) shows a compositional bias: basic residues. C2H2-type zinc fingers lie at residues 321-345 (FKCKEPGCKGRFKRQEHLKRHMKSH) and 351-376 (HVCWVPGCHRAFSRSDNLNAHYTKTH). The disordered stretch occupies residues 390-412 (DETSPDYDPEFRGQLTPDGRPIY).

The protein localises to the nucleus. BrlA, abaA and wetA are pivotal regulators of conidiophore development and conidium maturation. They act individually and together to regulate their own expression and that of numerous other sporulation-specific genes. Binds promoters of target genes at brlA response elements (BREs) containing the conserved sequence 5'-(C/A)(A/G)AGGG(G/A)-3'. Regulates the expression levels of seven secondary metabolism gene clusters including a down-regulated cluster putatively involved in the biosynthesis of the mycotoxins roquefortine C and meleagrin. Negatively regulates the expression of cellulase genes. This is C2H2 type master regulator of conidiophore development brlA from Penicillium oxalicum (strain 114-2 / CGMCC 5302) (Penicillium decumbens).